The sequence spans 484 residues: Probable glycine dehydrogenase (decarboxylating) subunit 2 (484 aa).

At Lys-264 the chain carries N6-(pyridoxal phosphate)lysine.

It belongs to the GcvP family. C-terminal subunit subfamily. In terms of assembly, the glycine cleavage system is composed of four proteins: P, T, L and H. In this organism, the P 'protein' is a heterodimer of two subunits. Pyridoxal 5'-phosphate is required as a cofactor.

It carries out the reaction N(6)-[(R)-lipoyl]-L-lysyl-[glycine-cleavage complex H protein] + glycine + H(+) = N(6)-[(R)-S(8)-aminomethyldihydrolipoyl]-L-lysyl-[glycine-cleavage complex H protein] + CO2. In terms of biological role, the glycine cleavage system catalyzes the degradation of glycine. The P protein binds the alpha-amino group of glycine through its pyridoxal phosphate cofactor; CO(2) is released and the remaining methylamine moiety is then transferred to the lipoamide cofactor of the H protein. This chain is Probable glycine dehydrogenase (decarboxylating) subunit 2, found in Legionella pneumophila (strain Lens).